The primary structure comprises 82 residues: MVIHIEGSNYVQSAILPHYIQATHKEDLLFDLDLNYLFNLGIVTFERVLGLIETLNQQEQQQQNNIAIVVQKQQETTFTILK.

This is an uncharacterized protein from Dictyostelium discoideum (Social amoeba).